We begin with the raw amino-acid sequence, 1606 residues long: Phosphatidylinositol 3,4,5-trisphosphate-dependent Rac exchanger 2 protein (1606 aa).

The region spanning 23–214 (LRVCVLSELQ…KAVCSNINEA (192 aa)) is the DH domain. The PH domain maps to 245–361 (EMLMCGVLLK…WFEAILKERE (117 aa)). DEP domains are found at residues 390–464 (CRQG…RFRY) and 491–566 (SLFT…FFSD). 2 consecutive PDZ domains span residues 592–671 (KSLL…VLVS) and 677–754 (TVKI…QDSI). The segment at 1581 to 1606 (GVRDRTPQSAPRLYKLCEPPPPAGEE) is disordered.

As to quaternary structure, interacts with RAC1. Isoform 1 is highly expressed in skeletal muscle, heart and placenta, absent from peripheral blood leukocytes. Isoform 2 is expressed in skeletal muscle, kidney, small intestine, and placenta. Isoform 3 is expressed in the heart.

In terms of biological role, functions as a RAC1 guanine nucleotide exchange factor (GEF), activating Rac proteins by exchanging bound GDP for free GTP. Its activity is synergistically activated by phosphatidylinositol 3,4,5-trisphosphate and the beta gamma subunits of heterotrimeric G protein. Mediates the activation of RAC1 in a PI3K-dependent manner. May be an important mediator of Rac signaling, acting directly downstream of both G protein-coupled receptors and phosphoinositide 3-kinase. The protein is Phosphatidylinositol 3,4,5-trisphosphate-dependent Rac exchanger 2 protein of Homo sapiens (Human).